We begin with the raw amino-acid sequence, 660 residues long: Methionine--tRNA ligase 1 (660 aa).

Residues 15 to 25 carry the 'HIGH' region motif; the sequence is YYPSGKLHIGH. Residues 310–314 carry the 'KMSKS' region motif; it reads KMSKS. Lys313 is a binding site for ATP. Residues 560–660 form the tRNA-binding domain; that stretch reads DFFKVELRVA…QNLPNGTKIK (101 aa).

The protein belongs to the class-I aminoacyl-tRNA synthetase family. MetG type 2B subfamily. Homodimer.

It localises to the cytoplasm. The catalysed reaction is tRNA(Met) + L-methionine + ATP = L-methionyl-tRNA(Met) + AMP + diphosphate. In terms of biological role, is required not only for elongation of protein synthesis but also for the initiation of all mRNA translation through initiator tRNA(fMet) aminoacylation. The protein is Methionine--tRNA ligase 1 of Bacillus cereus (strain ATCC 14579 / DSM 31 / CCUG 7414 / JCM 2152 / NBRC 15305 / NCIMB 9373 / NCTC 2599 / NRRL B-3711).